The sequence spans 310 residues: tRNA-cytidine(32) 2-sulfurtransferase (310 aa).

The short motif at 48-53 (SGGKDS) is the PP-loop motif element. [4Fe-4S] cluster contacts are provided by Cys-123, Cys-126, and Cys-214.

This sequence belongs to the TtcA family. Homodimer. Requires Mg(2+) as cofactor. [4Fe-4S] cluster is required as a cofactor.

The protein localises to the cytoplasm. It carries out the reaction cytidine(32) in tRNA + S-sulfanyl-L-cysteinyl-[cysteine desulfurase] + AH2 + ATP = 2-thiocytidine(32) in tRNA + L-cysteinyl-[cysteine desulfurase] + A + AMP + diphosphate + H(+). It participates in tRNA modification. Its function is as follows. Catalyzes the ATP-dependent 2-thiolation of cytidine in position 32 of tRNA, to form 2-thiocytidine (s(2)C32). The sulfur atoms are provided by the cysteine/cysteine desulfurase (IscS) system. The chain is tRNA-cytidine(32) 2-sulfurtransferase from Vibrio vulnificus (strain CMCP6).